The following is a 239-amino-acid chain: NADH-quinone oxidoreductase chain 2 (239 aa).

[2Fe-2S] cluster-binding residues include C96, C101, C137, and C141.

It belongs to the complex I 24 kDa subunit family. As to quaternary structure, NDH-1 is composed of at least 14 different subunits, Nqo1 to Nqo14. The complex has a L-shaped structure, with the hydrophobic arm (subunits Nqo7, Nqo8, Nqo10 to Nqo14) embedded in the inner membrane and the hydrophilic peripheral arm (subunits Nqo1 to Nqo6, Nqo9) protruding into the bacterial cytoplasm. The hydrophilic domain contains all the redox centers. [2Fe-2S] cluster serves as cofactor.

It is found in the cell inner membrane. The enzyme catalyses a quinone + NADH + 5 H(+)(in) = a quinol + NAD(+) + 4 H(+)(out). NDH-1 shuttles electrons from NADH, via FMN and iron-sulfur (Fe-S) centers, to quinones in the respiratory chain. The immediate electron acceptor for the enzyme in this species is believed to be ubiquinone. Couples the redox reaction to proton translocation (for every two electrons transferred, four hydrogen ions are translocated across the cytoplasmic membrane), and thus conserves the redox energy in a proton gradient. The sequence is that of NADH-quinone oxidoreductase chain 2 (nqo2) from Paracoccus denitrificans.